The chain runs to 213 residues: 5-methylthioribulose-1-phosphate/5-deoxyribulose-1-phosphate aldolase (213 aa).

Glutamate 73 functions as the Proton donor/acceptor in the catalytic mechanism. Co(2+) is bound by residues glutamate 73, histidine 92, histidine 94, and histidine 155.

Belongs to the aldolase class II family. Co(2+) is required as a cofactor.

It carries out the reaction 5-(methylsulfanyl)-D-ribulose 1-phosphate = 2-(methylsulfanyl)acetaldehyde + dihydroxyacetone phosphate. The enzyme catalyses 5-deoxy-D-ribulose 1-phosphate = dihydroxyacetone phosphate + acetaldehyde. It functions in the pathway amino-acid biosynthesis; L-methionine biosynthesis via salvage pathway. Its function is as follows. Uses 5-methylthioribulose-1-phosphate to yield 2-(methylthio)acetaldehyde and dihydroxyacetone phosphate. Can also use 5-deoxyribulose 1-phosphate to yield acetaldehyde and dihydroxyacetone phosphate. Part of a bifunctional DHAP-shunt salvage pathway for SAM by-products. The chain is 5-methylthioribulose-1-phosphate/5-deoxyribulose-1-phosphate aldolase from Escherichia coli O45:K1 (strain S88 / ExPEC).